A 909-amino-acid chain; its full sequence is MEDDGGSDGGEGNGGFSPNSSFGAFADTAMDLDFMDELLFDGCWLETTDSKSLKQTEQSPSASTAMNDNSPFLCFGENPSQDNFSNEETERMFPQAEKFLLEEAEVGKSWWIAPSASEGPSSSVKERLLQAISGLNEAVQDKDFLVQIWVPIQQEGKSFLTTWAQPHLFNQEYSSLAEYRHVSETYNFPADEGMKDFVGLPGRVFLQKFPEWTPDVRFFRRDEYPRIKEAQKCDVRGSLALPVFERGSGTCLGVVEIVTTTQKMNYRQELEKMCKALEAVDLRSSSNLNTPSSEFLQVYSDFYCAALPEIKDFLATICRSYDFPLALSWAPCARQGKVGSRHSDENFSECVSTIDSACSVPDEQSKSFWEACSEHHLLQGEGIVGKAFEATKLFFVPEVATFSKTNYPLAHHAKISGLHAALAVPLKSKSGLVEFVLEFFFPKACLDTEAQQEMLKSLCVTLQQDFRSSNLFIKDLELEVVLPVRETMLFSENLLCGAETVESLTEIQMQESSWIAHMIKANEKGKDVSLSWEYQKEDPKELSSGRENSQLDPVPNNVPLEAEQLQQASTPGLRVDIGPSTESASTGGGNMLSSRRPGEKKRAKTEKTIGLEVLRQYFAGSLKDAAKSIGVCPTTLKRICRQHGIMRWPSRKIKKVGHSLKKLQLVMDSVQGAQGSIQLDSFYTSFPELNSPNMSSNGPSLKSNEQPSHLNAQTDNGIMAEENPRSPSSSCSKSSGSSNNNENTGNILVAEDADAVLKRAHSEAQLHNVNQEETKCLARTQSHKTFKEPLVLDNSSPLTGSSNTSLRARGAIKVKATFGEARIRFTLLPSWGFAELKQEIARRFNIDDISWFDLKYLDDDKEWVLLTCEADLVECIDIYRLTQTHTIKISLNEASQVKLSGSFGNTGLS.

Disordered regions lie at residues Lys51–Pro71, Lys536–Asn556, Ala568–Thr605, and Asn690–Gly745. Residues Gln55 to Ser70 show a composition bias toward polar residues. Residues Arg595 to Ser676 enclose the RWP-RK domain. Polar residues predominate over residues Asn690–Asn716. The span at Arg725–Gly745 shows a compositional bias: low complexity. The PB1 domain occupies Ala811 to Ala894.

It localises to the nucleus. Probable transcription factor. In Arabidopsis thaliana (Mouse-ear cress), this protein is Protein NLP1 (NLP1).